A 105-amino-acid polypeptide reads, in one-letter code: Small ribosomal subunit protein eS25 (105 aa).

This sequence belongs to the eukaryotic ribosomal protein eS25 family. As to quaternary structure, component of the small ribosomal subunit. Mature ribosomes consist of a small (40S) and a large (60S) subunit. The 40S subunit contains about 32 different proteins and 1 molecule of RNA (18S). The 60S subunit contains 45 different proteins and 3 molecules of RNA (25S, 5.8S and 5S).

It localises to the cytoplasm. Component of the ribosome, a large ribonucleoprotein complex responsible for the synthesis of proteins in the cell. The small ribosomal subunit (SSU) binds messenger RNAs (mRNAs) and translates the encoded message by selecting cognate aminoacyl-transfer RNA (tRNA) molecules. The large subunit (LSU) contains the ribosomal catalytic site termed the peptidyl transferase center (PTC), which catalyzes the formation of peptide bonds, thereby polymerizing the amino acids delivered by tRNAs into a polypeptide chain. The nascent polypeptides leave the ribosome through a tunnel in the LSU and interact with protein factors that function in enzymatic processing, targeting, and the membrane insertion of nascent chains at the exit of the ribosomal tunnel. In Candida albicans (strain SC5314 / ATCC MYA-2876) (Yeast), this protein is Small ribosomal subunit protein eS25 (RPS25B).